The chain runs to 135 residues: Protein PilG (135 aa).

Residues 9–125 (KVMVIDDSKT…ELLGAIKAHV (117 aa)) enclose the Response regulatory domain. Aspartate 58 carries the post-translational modification 4-aspartylphosphate.

In terms of processing, phosphorylated.

In terms of biological role, plays an essential role in both cAMP-dependent and independent regulation of twitching motility. Regulates the cAMP-independent coordination of type IV pilus (T4P) biogenesis and retraction that plays a role in surface and host cell adhesion, colonization, biofilm maturation, virulence, and twitching. In addition, phosphorylated PilG is necessary for cAMP production via regulation of the adenylate cyclase CyaB. Acts therefore as a response regulator of the chemosensory system/Chp system. The sequence is that of Protein PilG (pilG) from Pseudomonas aeruginosa (strain ATCC 15692 / DSM 22644 / CIP 104116 / JCM 14847 / LMG 12228 / 1C / PRS 101 / PAO1).